A 184-amino-acid chain; its full sequence is C-phycoerythrin class 1 subunit beta (184 aa).

(2R,3E)-phycoerythrobilin-binding residues include Cys-50 and Cys-61. N4-methylasparagine is present on Asn-72. 2 residues coordinate (2R,3E)-phycoerythrobilin: Cys-82 and Cys-165.

The protein belongs to the phycobiliprotein family. Heterodimer of an alpha and a beta chain. Contains three covalently linked phycoerythrobilin chromophores.

Its subcellular location is the cellular thylakoid membrane. Light-harvesting photosynthetic bile pigment-protein from the phycobiliprotein complex. The polypeptide is C-phycoerythrin class 1 subunit beta (cpeB) (Synechococcus sp. (strain WH8020)).